Consider the following 24-residue polypeptide: Homotarsinin (24 aa).

At arginine 24 the chain carries Arginine amide.

In terms of assembly, homodimer; disulfide-linked. In terms of tissue distribution, expressed by the skin glands.

It is found in the secreted. Antimicrobial peptide. Active against Gram-negative bacteria E.coli ATCC 25922 (MIC=1.5 uM) and P.aeruginosa ATTC 27853 (MIC=23.2 uM) and against Gram-positive bacterium S.aureus ATCC 29313 (MIC=11.6 uM). Has no hemolytic activity. Associates with and disrupts membranes in vitro. This is Homotarsinin from Phyllomedusa tarsius (Brownbelly leaf frog).